Here is a 139-residue protein sequence, read N- to C-terminus: Large ribosomal subunit protein uL16 (139 aa).

It belongs to the universal ribosomal protein uL16 family. Part of the 50S ribosomal subunit.

Its function is as follows. Binds 23S rRNA and is also seen to make contacts with the A and possibly P site tRNAs. The sequence is that of Large ribosomal subunit protein uL16 from Koribacter versatilis (strain Ellin345).